Here is a 136-residue protein sequence, read N- to C-terminus: Cell division protein SepF 3 (136 aa).

It belongs to the SepF family. In terms of assembly, homodimer. Interacts with FtsZ.

Its subcellular location is the cytoplasm. Functionally, cell division protein that is part of the divisome complex and is recruited early to the Z-ring. Probably stimulates Z-ring formation, perhaps through the cross-linking of FtsZ protofilaments. Its function overlaps with FtsA. This Streptomyces coelicolor (strain ATCC BAA-471 / A3(2) / M145) protein is Cell division protein SepF 3.